We begin with the raw amino-acid sequence, 513 residues long: Bifunctional pantoate ligase/cytidylate kinase (513 aa).

The pantoate--beta-alanine ligase stretch occupies residues 1-283 (MVQVFRTIAG…VGSTRLIDNL (283 aa)). 30 to 37 (MGSLHAGH) is an ATP binding site. H37 serves as the catalytic Proton donor. Q61 is a binding site for (R)-pantoate. Q61 provides a ligand contact to beta-alanine. 150-153 (GAKD) serves as a coordination point for ATP. Q156 is a binding site for (R)-pantoate. ATP is bound by residues V179 and 187-190 (MSSR). The interval 284-513 (VLNHRLPIIA…IELYKKYNKG (230 aa)) is cytidylate kinase.

The protein in the N-terminal section; belongs to the pantothenate synthetase family. It in the C-terminal section; belongs to the cytidylate kinase family. Type 1 subfamily.

It localises to the cytoplasm. The enzyme catalyses (R)-pantoate + beta-alanine + ATP = (R)-pantothenate + AMP + diphosphate + H(+). It catalyses the reaction CMP + ATP = CDP + ADP. The catalysed reaction is dCMP + ATP = dCDP + ADP. It functions in the pathway cofactor biosynthesis; (R)-pantothenate biosynthesis; (R)-pantothenate from (R)-pantoate and beta-alanine: step 1/1. Functionally, catalyzes the condensation of pantoate with beta-alanine in an ATP-dependent reaction via a pantoyl-adenylate intermediate. Catalyzes the transfer of a phosphate group from ATP to either CMP or dCMP to form CDP or dCDP and ADP, respectively. This chain is Bifunctional pantoate ligase/cytidylate kinase, found in Synechocystis sp. (strain ATCC 27184 / PCC 6803 / Kazusa).